The chain runs to 423 residues: Imidazolonepropionase (423 aa).

Positions 78 and 80 each coordinate Fe(3+). Residues His-78 and His-80 each coordinate Zn(2+). The 4-imidazolone-5-propanoate site is built by Arg-87, Tyr-150, and His-183. An N-formimidoyl-L-glutamate-binding site is contributed by Tyr-150. Residue His-247 coordinates Fe(3+). His-247 is a binding site for Zn(2+). Residue Glu-250 participates in 4-imidazolone-5-propanoate binding. Asp-322 serves as a coordination point for Fe(3+). Residue Asp-322 coordinates Zn(2+). The N-formimidoyl-L-glutamate site is built by Asn-324 and Gly-326. Ser-327 is a 4-imidazolone-5-propanoate binding site.

It belongs to the metallo-dependent hydrolases superfamily. HutI family. Zn(2+) serves as cofactor. Fe(3+) is required as a cofactor.

It localises to the cytoplasm. The enzyme catalyses 4-imidazolone-5-propanoate + H2O = N-formimidoyl-L-glutamate. The protein operates within amino-acid degradation; L-histidine degradation into L-glutamate; N-formimidoyl-L-glutamate from L-histidine: step 3/3. Its function is as follows. Catalyzes the hydrolytic cleavage of the carbon-nitrogen bond in imidazolone-5-propanoate to yield N-formimidoyl-L-glutamate. It is the third step in the universal histidine degradation pathway. In Bacillus cereus (strain G9842), this protein is Imidazolonepropionase.